We begin with the raw amino-acid sequence, 37 residues long: M-oxotoxin-Ot2c (37 aa).

Expressed by the venom gland.

Its subcellular location is the secreted. Disrupts biological membranes, particularly those rich in phosphocholine. Has antimicrobial activity against Gram-negative bacterium E.coli, Gram-positive bacteria B.subtilis and S.aureus, and hemolytic activity against sheep, pig and guinea pig red blood cells. Has insecticidal activity against S.frugiperda ovarian cells by opening non-selective ion channels. Enhances the insecticidal activity of spider venom neurotoxic peptides. In Oxyopes takobius (Lynx spider), this protein is M-oxotoxin-Ot2c.